The sequence spans 254 residues: Phosphoribosylaminoimidazole-succinocarboxamide synthase (254 aa).

It belongs to the SAICAR synthetase family.

The enzyme catalyses 5-amino-1-(5-phospho-D-ribosyl)imidazole-4-carboxylate + L-aspartate + ATP = (2S)-2-[5-amino-1-(5-phospho-beta-D-ribosyl)imidazole-4-carboxamido]succinate + ADP + phosphate + 2 H(+). It participates in purine metabolism; IMP biosynthesis via de novo pathway; 5-amino-1-(5-phospho-D-ribosyl)imidazole-4-carboxamide from 5-amino-1-(5-phospho-D-ribosyl)imidazole-4-carboxylate: step 1/2. The chain is Phosphoribosylaminoimidazole-succinocarboxamide synthase from Gluconobacter oxydans (strain 621H) (Gluconobacter suboxydans).